We begin with the raw amino-acid sequence, 183 residues long: Small ribosomal subunit protein uS4c (183 aa).

An S4 RNA-binding domain is found at 82-143 (MRLDNILFRL…KQRSKALIQN (62 aa)).

Belongs to the universal ribosomal protein uS4 family. As to quaternary structure, part of the 30S ribosomal subunit. Contacts protein S5. The interaction surface between S4 and S5 is involved in control of translational fidelity.

The protein localises to the plastid. It is found in the chloroplast. Functionally, one of the primary rRNA binding proteins, it binds directly to 16S rRNA where it nucleates assembly of the body of the 30S subunit. In terms of biological role, with S5 and S12 plays an important role in translational accuracy. The chain is Small ribosomal subunit protein uS4c (rps4) from Schizorhiza neglecta (Lapeirousia neglecta).